A 461-amino-acid polypeptide reads, in one-letter code: Propionyl-CoA carboxylase regulator (461 aa).

The 55-residue stretch at 11–65 folds into the HTH cro/C1-type domain; sequence LRELRVKLGLTQKVFAERLGASLPYLNQMENNHRPVSATVVLALAQEFGVDVTKL. Residues 22–41 constitute a DNA-binding region (H-T-H motif); that stretch reads QKVFAERLGASLPYLNQMEN.

This sequence belongs to the short-chain fatty acyl-CoA assimilation regulator (ScfR) family.

Transcriptional regulator that controls propionyl-CoA assimilation through the methylmalonyl-CoA pathway via regulation of pccB expression. The chain is Propionyl-CoA carboxylase regulator from Cereibacter sphaeroides (strain ATCC 17023 / DSM 158 / JCM 6121 / CCUG 31486 / LMG 2827 / NBRC 12203 / NCIMB 8253 / ATH 2.4.1.) (Rhodobacter sphaeroides).